The following is a 449-amino-acid chain: Phosphoglucosamine mutase (449 aa).

S104 acts as the Phosphoserine intermediate in catalysis. The Mg(2+) site is built by S104, D243, D245, and D247. Phosphoserine is present on S104.

It belongs to the phosphohexose mutase family. Mg(2+) serves as cofactor. In terms of processing, activated by phosphorylation.

The catalysed reaction is alpha-D-glucosamine 1-phosphate = D-glucosamine 6-phosphate. Its function is as follows. Catalyzes the conversion of glucosamine-6-phosphate to glucosamine-1-phosphate. In Xanthomonas oryzae pv. oryzae (strain PXO99A), this protein is Phosphoglucosamine mutase.